Consider the following 307-residue polypeptide: Protein phosphatase EYA (307 aa).

Residues 1 to 15 (MNNDTSKKLGTLVSD) are necessary for optimum phosphatase activity. The active-site Nucleophile is the aspartate 25. Mg(2+) contacts are provided by aspartate 25, aspartate 27, and aspartate 253. Catalysis depends on aspartate 27, which acts as the Proton donor.

Belongs to the HAD-like hydrolase superfamily. EYA family. It depends on Mg(2+) as a cofactor.

It catalyses the reaction O-phospho-L-tyrosyl-[protein] + H2O = L-tyrosyl-[protein] + phosphate. Its activity is regulated as follows. Inhibited by EDTA. In terms of biological role, possesses phosphatase activity toward para-nitrophenyl phosphate (pNPP) in vitro. Possesses phosphatase activity toward several phosphotyrosine-containing peptides in vitro, with low peptide substrate specificity. This is Protein phosphatase EYA from Arabidopsis thaliana (Mouse-ear cress).